The following is a 371-amino-acid chain: Outer membrane protein P2 (371 aa).

The N-terminal stretch at 1–20 is a signal peptide; the sequence is MKKTLAALIVGAFAASAANA.

This sequence belongs to the Gram-negative porin family. As to quaternary structure, homotrimer.

The protein resides in the cell outer membrane. In terms of biological role, forms pores that allow passive diffusion of small molecules across the outer membrane. The polypeptide is Outer membrane protein P2 (ompP2) (Haemophilus influenzae).